The chain runs to 597 residues: Kelch-like protein 21 (597 aa).

Residues 35–103 enclose the BTB domain; that stretch reads LDVTLEAAGG…SYTGRVAVSG (69 aa). A BACK domain is found at 138–239; the sequence is CLDMQDFAEA…RRFYLLAHVE (102 aa). Kelch repeat units lie at residues 287-335, 336-382, 384-422, 424-463, 464-512, and 513-560; these read ILVL…ALGN, DIYV…VLDG, LYVV…ACRG, LYAI…SFAP, KTVT…VLGG, and KLYV…SIFR. The disordered stretch occupies residues 570–597; that stretch reads GRGFELDGGSSDMDVGQPRPPQNPAELH. Residues 587–597 are compositionally biased toward pro residues; that stretch reads PRPPQNPAELH.

As to quaternary structure, component of the BCR(KLHL21) E3 ubiquitin ligase complex, at least composed of CUL3, KLHL21 and RBX1.

It localises to the cytoplasm. The protein localises to the cytoskeleton. Its subcellular location is the spindle. Its pathway is protein modification; protein ubiquitination. Substrate-specific adapter of a BCR (BTB-CUL3-RBX1) E3 ubiquitin-protein ligase complex required for efficient chromosome alignment and cytokinesis. The BCR(KLHL21) E3 ubiquitin ligase complex regulates localization of the chromosomal passenger complex (CPC) from chromosomes to the spindle midzone in anaphase and mediates the ubiquitination of AURKB. Ubiquitination of AURKB by BCR(KLHL21) E3 ubiquitin ligase complex may not lead to its degradation by the proteasome. The polypeptide is Kelch-like protein 21 (KLHL21) (Bos taurus (Bovine)).